Reading from the N-terminus, the 327-residue chain is Phenylalanine--tRNA ligase alpha subunit (327 aa).

Mg(2+) is bound at residue Glu252.

This sequence belongs to the class-II aminoacyl-tRNA synthetase family. Phe-tRNA synthetase alpha subunit type 1 subfamily. Tetramer of two alpha and two beta subunits. The cofactor is Mg(2+).

The protein resides in the cytoplasm. The enzyme catalyses tRNA(Phe) + L-phenylalanine + ATP = L-phenylalanyl-tRNA(Phe) + AMP + diphosphate + H(+). This is Phenylalanine--tRNA ligase alpha subunit from Escherichia coli O139:H28 (strain E24377A / ETEC).